The sequence spans 453 residues: MSFTLAIVGRPNVGKSTLFNRLVGKRLALVDDRPGVTRDRREGDARLGDLAFRIVDTAGLEEADADSLEGRMRAQTETAIGDADALLFLIDARVGLTPTDRAFASLARRSGKPTILVANKSEGRGGEAGAMEAYELGLGAPVPLSAEHGEGLSDLYDAICEALPAQTAPQEEDEETEEAEANPNRPIKVAVIGRPNAGKSTLINRLLGEDRLLTGPEAGITRDSISVEVTWNGRALEVFDTAGLRKRARIEDKLEKLSAADALRAMKFAEVVVVLMDATKPFEEQDLRIADLVVREGRALVLGYNKSDLVGPAAFSRLREEADHWLPQVKGVPIVPLSGLTGRGLDKLVEAIAATYAVWNTRIPTNPLNRYLQEATDSHPPPAVSGRRVKIRYMTQPKARPPSFVLFCSRPEALPESYLRYITNGLREAFSLPGVPIRLTLREKGNPYADKDK.

EngA-type G domains are found at residues 3–167 (FTLA…PAQT) and 187–360 (IKVA…AVWN). GTP is bound by residues 9–16 (GRPNVGKS), 56–60 (DTAGL), 119–122 (NKSE), 193–200 (GRPNAGKS), 240–244 (DTAGL), and 305–308 (NKSD). Positions 361-445 (TRIPTNPLNR…PIRLTLREKG (85 aa)) constitute a KH-like domain.

It belongs to the TRAFAC class TrmE-Era-EngA-EngB-Septin-like GTPase superfamily. EngA (Der) GTPase family. As to quaternary structure, associates with the 50S ribosomal subunit.

Its function is as follows. GTPase that plays an essential role in the late steps of ribosome biogenesis. In Azorhizobium caulinodans (strain ATCC 43989 / DSM 5975 / JCM 20966 / LMG 6465 / NBRC 14845 / NCIMB 13405 / ORS 571), this protein is GTPase Der.